The sequence spans 101 residues: Small ribosomal subunit protein uS14 (101 aa).

This sequence belongs to the universal ribosomal protein uS14 family. In terms of assembly, part of the 30S ribosomal subunit. Contacts proteins S3 and S10.

In terms of biological role, binds 16S rRNA, required for the assembly of 30S particles and may also be responsible for determining the conformation of the 16S rRNA at the A site. This is Small ribosomal subunit protein uS14 from Aliivibrio fischeri (strain ATCC 700601 / ES114) (Vibrio fischeri).